Here is a 200-residue protein sequence, read N- to C-terminus: Small ribosomal subunit protein uS4 (200 aa).

The interval 22 to 42 is disordered; the sequence is TGKELQKRPYPPGQHGPGQRR. Residues 92–152 form the S4 RNA-binding domain; it reads SRLDNLVYRL…EKSRNLQVIK (61 aa).

This sequence belongs to the universal ribosomal protein uS4 family. In terms of assembly, part of the 30S ribosomal subunit. Contacts protein S5. The interaction surface between S4 and S5 is involved in control of translational fidelity.

Its function is as follows. One of the primary rRNA binding proteins, it binds directly to 16S rRNA where it nucleates assembly of the body of the 30S subunit. Functionally, with S5 and S12 plays an important role in translational accuracy. The polypeptide is Small ribosomal subunit protein uS4 (rpsD) (Geobacillus stearothermophilus (Bacillus stearothermophilus)).